We begin with the raw amino-acid sequence, 627 residues long: Pescadillo homolog (627 aa).

The BRCT domain maps to 321–414 (RLRTLFKGLK…QLLPTNKYFI (94 aa)). 3 disordered regions span residues 450 to 469 (HAQS…ETVD), 488 to 566 (YKKY…MVKP), and 595 to 627 (TIEA…KLGK). S453 and S457 each carry phosphoserine. Composition is skewed to acidic residues over residues 454-469 (DDDS…ETVD) and 497-521 (VNED…EELD). Residues 522–533 (EKTKRLQEEKQK) are compositionally biased toward basic and acidic residues. Residues 540–549 (KVHKVNKRQV) show a composition bias toward basic residues. Basic and acidic residues-rich tracts occupy residues 550–559 (HKAEVDEHRL) and 595–615 (TIEA…RKEA). The stretch at 582-625 (KEKEEWLLRKKRRTIEASEKEARKTAKREARKEAAAAAAKASKL) forms a coiled coil. A compositionally biased stretch (low complexity) spans 616–627 (AAAAAKASKLGK).

It belongs to the pescadillo family.

It localises to the nucleus. It is found in the nucleolus. The protein resides in the nucleoplasm. In terms of biological role, required for maturation of ribosomal RNAs and formation of the large ribosomal subunit. The chain is Pescadillo homolog from Drosophila simulans (Fruit fly).